Reading from the N-terminus, the 213-residue chain is Large ribosomal subunit protein uL4 (213 aa).

The segment at 51 to 90 is disordered; sequence TASTLTKAEVRGGGRKPYKQKHTGRARQGSIRNPHYVGGG. Basic residues predominate over residues 63–75; the sequence is GGRKPYKQKHTGR.

The protein belongs to the universal ribosomal protein uL4 family. In terms of assembly, part of the 50S ribosomal subunit.

In terms of biological role, one of the primary rRNA binding proteins, this protein initially binds near the 5'-end of the 23S rRNA. It is important during the early stages of 50S assembly. It makes multiple contacts with different domains of the 23S rRNA in the assembled 50S subunit and ribosome. Forms part of the polypeptide exit tunnel. The sequence is that of Large ribosomal subunit protein uL4 from Malacoplasma penetrans (strain HF-2) (Mycoplasma penetrans).